Here is a 150-residue protein sequence, read N- to C-terminus: Lipoprotein signal peptidase (150 aa).

A run of 3 helical transmembrane segments spans residues 8–28 (FYAL…LAHA), 58–78 (GFSW…GWFL), and 81–101 (TTGS…NVFD). Catalysis depends on residues Asp-116 and Asp-132. A helical transmembrane segment spans residues 126 to 146 (VVFNIADLFILAGVFGTFLFL).

This sequence belongs to the peptidase A8 family.

Its subcellular location is the cell membrane. The catalysed reaction is Release of signal peptides from bacterial membrane prolipoproteins. Hydrolyzes -Xaa-Yaa-Zaa-|-(S,diacylglyceryl)Cys-, in which Xaa is hydrophobic (preferably Leu), and Yaa (Ala or Ser) and Zaa (Gly or Ala) have small, neutral side chains.. It participates in protein modification; lipoprotein biosynthesis (signal peptide cleavage). Its function is as follows. This protein specifically catalyzes the removal of signal peptides from prolipoproteins. This chain is Lipoprotein signal peptidase, found in Tropheryma whipplei (strain Twist) (Whipple's bacillus).